The primary structure comprises 361 residues: Queuine tRNA-ribosyltransferase (361 aa).

Asp-92 functions as the Proton acceptor in the catalytic mechanism. Substrate-binding positions include 92-96, Asp-146, Gln-189, and Gly-216; that span reads DSGGF. The RNA binding stretch occupies residues 247-253; that stretch reads GVGKPSD. The active-site Nucleophile is Asp-266. Residues 271-275 are RNA binding; important for wobble base 34 recognition; sequence TRSGR. Residues Cys-304, Cys-306, Cys-309, and His-335 each contribute to the Zn(2+) site.

It belongs to the queuine tRNA-ribosyltransferase family. In terms of assembly, homodimer. Within each dimer, one monomer is responsible for RNA recognition and catalysis, while the other monomer binds to the replacement base PreQ1. Requires Zn(2+) as cofactor.

The catalysed reaction is 7-aminomethyl-7-carbaguanine + guanosine(34) in tRNA = 7-aminomethyl-7-carbaguanosine(34) in tRNA + guanine. The protein operates within tRNA modification; tRNA-queuosine biosynthesis. Functionally, catalyzes the base-exchange of a guanine (G) residue with the queuine precursor 7-aminomethyl-7-deazaguanine (PreQ1) at position 34 (anticodon wobble position) in tRNAs with GU(N) anticodons (tRNA-Asp, -Asn, -His and -Tyr). Catalysis occurs through a double-displacement mechanism. The nucleophile active site attacks the C1' of nucleotide 34 to detach the guanine base from the RNA, forming a covalent enzyme-RNA intermediate. The proton acceptor active site deprotonates the incoming PreQ1, allowing a nucleophilic attack on the C1' of the ribose to form the product. After dissociation, two additional enzymatic reactions on the tRNA convert PreQ1 to queuine (Q), resulting in the hypermodified nucleoside queuosine (7-(((4,5-cis-dihydroxy-2-cyclopenten-1-yl)amino)methyl)-7-deazaguanosine). The polypeptide is Queuine tRNA-ribosyltransferase (Rickettsia prowazekii (strain Madrid E)).